Here is a 449-residue protein sequence, read N- to C-terminus: MSTRRTAAALLAAAAVAVGGLTALTTTAAQAAPGCRVDYAVTNQWPGGFGANVTITNLGDPVSSWKLDWTYTAGQRIQQLWNGTASTNGGQVSVTSLPWNGSIPTGGTASFGFNGSWAGSNPTPASFSLNGTTCTGTVPTTSPTPTPTPTTPTPTPTPTPTPTPTVTPQPTSGFYVDPTTQGYRAWQAASGTDKALLEKIALTPQAYWVGNWADASHAQAEVADYTGRAVAAGKTPMLVVYAIPGRDCGSHSGGGVSESEYARWVDTVAQGIKGNPIVILEPDALAQLGDCSGQGDRVGFLKYAAKSLTLKGARVYIDAGHAKWLSVDTPVNRLNQVGFEYAVGFALNTSNYQTTADSKAYGQQISQRLGGKKFVIDTSRNGNGSNGEWCNPRGRALGERPVAVNDGSGLDALLWVKLPGESDGACNGGPAAGQWWQEIALEMARNARW.

Positions 1-31 (MSTRRTAAALLAAAAVAVGGLTALTTTAAQA) form a signal peptide, tat-type signal. A CBM2 domain is found at 32–137 (APGCRVDYAV…SLNGTTCTGT (106 aa)). The cysteines at positions 35 and 134 are disulfide-linked. The tract at residues 127-170 (FSLNGTTCTGTVPTTSPTPTPTPTTPTPTPTPTPTPTPTVTPQP) is disordered. Over residues 132-141 (TTCTGTVPTT) the composition is skewed to low complexity. Residues 139–168 (PTTSPTPTPTPTTPTPTPTPTPTPTPTVTP) form a linker ('hinge') (Pro-Thr box) region. Pro residues predominate over residues 142–167 (SPTPTPTPTTPTPTPTPTPTPTPTVT). D247 is an active-site residue. 2 disulfides stabilise this stretch: C248–C291 and C390–C426. D283 (proton donor) is an active-site residue. D423 functions as the Nucleophile in the catalytic mechanism. Residues 438–449 (EIALEMARNARW) form a catalytic region.

It belongs to the glycosyl hydrolase 6 (cellulase B) family. In terms of processing, the linker region (also termed 'hinge') may be a potential site for proteolysis. Post-translationally, predicted to be exported by the Tat system. The position of the signal peptide cleavage has not been experimentally proven.

The enzyme catalyses Endohydrolysis of (1-&gt;4)-beta-D-glucosidic linkages in cellulose, lichenin and cereal beta-D-glucans.. Functionally, the biological conversion of cellulose to glucose generally requires three types of hydrolytic enzymes: (1) Endoglucanases which cut internal beta-1,4-glucosidic bonds; (2) Exocellobiohydrolases that cut the disaccharide cellobiose from the non-reducing end of the cellulose polymer chain; (3) Beta-1,4-glucosidases which hydrolyze the cellobiose and other short cello-oligosaccharides to glucose. The protein is Endoglucanase A (cenA) of Cellulomonas fimi.